A 705-amino-acid chain; its full sequence is Tryptophan synthase (705 aa).

The tryptophan synthase alpha chain stretch occupies residues 1–293 (MEAIKKVFEQ…QLTPNAETAK (293 aa)). Catalysis depends on proton acceptor residues glutamate 49 and aspartate 60. The disordered stretch occupies residues 266–287 (KGEPSRVRSPGAAQRTPSQLTP). Positions 294–705 (GVENILPARF…HVSSNAIPSK (412 aa)) are tryptophan synthase beta chain. Lysine 381 is subject to N6-(pyridoxal phosphate)lysine.

In the N-terminal section; belongs to the TrpA family. The protein in the C-terminal section; belongs to the TrpB family. Pyridoxal 5'-phosphate is required as a cofactor.

It carries out the reaction (1S,2R)-1-C-(indol-3-yl)glycerol 3-phosphate + L-serine = D-glyceraldehyde 3-phosphate + L-tryptophan + H2O. Its pathway is amino-acid biosynthesis; L-tryptophan biosynthesis; L-tryptophan from chorismate: step 5/5. The polypeptide is Tryptophan synthase (TRP-1) (Coprinopsis cinerea (Inky cap fungus)).